A 259-amino-acid chain; its full sequence is 3'-5' ssDNA/RNA exonuclease TatD (259 aa).

3 residues coordinate a divalent metal cation: Glu92, His128, and His153.

This sequence belongs to the metallo-dependent hydrolases superfamily. TatD-type hydrolase family. TatD subfamily. Monomer. Requires Mg(2+) as cofactor.

The protein localises to the cytoplasm. 3'-5' exonuclease that prefers single-stranded DNA and RNA. May play a role in the H(2)O(2)-induced DNA damage repair. This is 3'-5' ssDNA/RNA exonuclease TatD from Erwinia amylovora (strain ATCC 49946 / CCPPB 0273 / Ea273 / 27-3).